Consider the following 440-residue polypeptide: Thymidine phosphorylase (440 aa).

Belongs to the thymidine/pyrimidine-nucleoside phosphorylase family. As to quaternary structure, homodimer.

It catalyses the reaction thymidine + phosphate = 2-deoxy-alpha-D-ribose 1-phosphate + thymine. It participates in pyrimidine metabolism; dTMP biosynthesis via salvage pathway; dTMP from thymine: step 1/2. Functionally, the enzymes which catalyze the reversible phosphorolysis of pyrimidine nucleosides are involved in the degradation of these compounds and in their utilization as carbon and energy sources, or in the rescue of pyrimidine bases for nucleotide synthesis. This Cronobacter sakazakii (strain ATCC BAA-894) (Enterobacter sakazakii) protein is Thymidine phosphorylase.